A 235-amino-acid polypeptide reads, in one-letter code: Elongation factor Tu, chloroplastic (235 aa).

The tr-type G domain maps to lysine 1–threonine 125. GTP is bound at residue asparagine 47 to aspartate 50.

Belongs to the TRAFAC class translation factor GTPase superfamily. Classic translation factor GTPase family. EF-Tu/EF-1A subfamily.

It is found in the plastid. The protein resides in the chloroplast. It catalyses the reaction GTP + H2O = GDP + phosphate + H(+). Functionally, GTP hydrolase that promotes the GTP-dependent binding of aminoacyl-tRNA to the A-site of ribosomes during protein biosynthesis. In Bryopsis plumosa (Green alga), this protein is Elongation factor Tu, chloroplastic (tufA).